Consider the following 331-residue polypeptide: 2-hydroxyacid dehydrogenase homolog (331 aa).

NAD(+)-binding positions include 154 to 155 (KI), 232 to 234 (TSR), and Asp258. Residue Arg234 is part of the active site. Glu263 is an active-site residue. The Proton donor role is filled by His295. 295-298 (HQAF) provides a ligand contact to NAD(+).

Belongs to the D-isomer specific 2-hydroxyacid dehydrogenase family.

The chain is 2-hydroxyacid dehydrogenase homolog (ddh) from Haemophilus influenzae (strain ATCC 51907 / DSM 11121 / KW20 / Rd).